A 248-amino-acid chain; its full sequence is Ras-like protein family member 11B (248 aa).

Positions Ala-29–Thr-246 are small GTPase-like. GTP is bound by residues Gly-40 to Thr-47, Asp-87 to His-94, and Asn-152 to Asp-155. A disordered region spans residues Gln-205 to Asn-226.

This sequence belongs to the small GTPase superfamily. Ras family. As to expression, widely expressed with highest levels in placenta and primary macrophages.

It carries out the reaction GTP + H2O = GDP + phosphate + H(+). This Homo sapiens (Human) protein is Ras-like protein family member 11B.